Reading from the N-terminus, the 415-residue chain is Casein kinase I isoform delta (415 aa).

Residues 9-277 (YRLGRKIGSG…YLRQLFRNLF (269 aa)) enclose the Protein kinase domain. Residues 15 to 23 (IGSGSFGDI) and lysine 38 each bind ATP. Aspartate 128 serves as the catalytic Proton acceptor. The segment at 278–364 (HRQGFSYDYV…TSPRPVSGME (87 aa)) is centrosomal localization signal (CLS). A compositionally biased stretch (basic and acidic residues) spans 301–315 (ADDAERERRDREERL). The segment at 301–415 (ADDAERERRD…SSGLQSVVHR (115 aa)) is disordered. The interval 317–342 (HSRNPATRGLPSTASGRLRGTQEVAP) is autoinhibitory. 2 positions are modified to phosphoserine: serine 328 and serine 331. Residues 347-358 (TPTSHTANTSPR) are compositionally biased toward polar residues. At serine 370 the chain carries Phosphoserine. Arginine 375 is modified (omega-N-methylarginine). Positions 380 to 400 (NISSSDLTGRQDTSRMSTSQI) are enriched in polar residues. Phosphoserine occurs at positions 382, 383, 384, 407, and 411.

The protein belongs to the protein kinase superfamily. CK1 Ser/Thr protein kinase family. Casein kinase I subfamily. As to quaternary structure, monomer. Component of the circadian core oscillator, which includes the CRY proteins, CLOCK, or NPAS2, ARTNL/BMAL1 or ARTNL2/BMAL2, CSNK1D and/or CSNK1E, TIMELESS and the PER proteins. Interacts with DNMT1 and MAP1A. Interacts directly with PER1 and PER2 which may lead to their degradation. Interacts with MAPT/TAU, SNAPIN, DBNDD2, AIB1/NCOA3 and ESR1. Interacts with AKAP9/AKAP450; this interaction promotes centrosomal subcellular location. Binds to tubulins in mitotic cells upon DNA damage. Interacts with GJA1. Interacts with DDX3X; this interaction enhances CSNK1D kinase activity in vitro, but it is unclear whether this interaction is physiologically relevant. Interacts with FAM83A, FAM83B, FAM83E and FAM83H (via DUF1669). In terms of processing, autophosphorylated on serine and threonine residues; this autophosphorylation represses activity. Reactivated by phosphatase-mediated dephosphorylation. May be dephosphorylated by PP1.

It localises to the cytoplasm. It is found in the nucleus. The protein resides in the cytoskeleton. The protein localises to the microtubule organizing center. Its subcellular location is the centrosome. It localises to the perinuclear region. It is found in the cell membrane. The protein resides in the spindle. The protein localises to the golgi apparatus. It carries out the reaction L-seryl-[protein] + ATP = O-phospho-L-seryl-[protein] + ADP + H(+). The catalysed reaction is L-threonyl-[protein] + ATP = O-phospho-L-threonyl-[protein] + ADP + H(+). It catalyses the reaction L-seryl-[tau protein] + ATP = O-phospho-L-seryl-[tau protein] + ADP + H(+). The enzyme catalyses L-threonyl-[tau protein] + ATP = O-phospho-L-threonyl-[tau protein] + ADP + H(+). Drug-mediated inhibition leads to a delay of the oscillations with the magnitude of this effect dependent upon the timing of drug administration. Inhibited by phosphorylation. Exhibits substrate-dependent heparin activation. In terms of biological role, essential serine/threonine-protein kinase that regulates diverse cellular growth and survival processes including Wnt signaling, DNA repair and circadian rhythms. It can phosphorylate a large number of proteins. Casein kinases are operationally defined by their preferential utilization of acidic proteins such as caseins as substrates. Phosphorylates connexin-43/GJA1, MAP1A, SNAPIN, MAPT/TAU, TOP2A, DCK, HIF1A, EIF6, p53/TP53, DVL2, DVL3, ESR1, AIB1/NCOA3, DNMT1, PKD2, YAP1, PER1 and PER2. Central component of the circadian clock. In balance with PP1, determines the circadian period length through the regulation of the speed and rhythmicity of PER1 and PER2 phosphorylation. Controls PER1 and PER2 nuclear transport and degradation. YAP1 phosphorylation promotes its SCF(beta-TRCP) E3 ubiquitin ligase-mediated ubiquitination and subsequent degradation. DNMT1 phosphorylation reduces its DNA-binding activity. Phosphorylation of ESR1 and AIB1/NCOA3 stimulates their activity and coactivation. Phosphorylation of DVL2 and DVL3 regulates WNT3A signaling pathway that controls neurite outgrowth. Phosphorylates NEDD9/HEF1. EIF6 phosphorylation promotes its nuclear export. Triggers down-regulation of dopamine receptors in the forebrain. Activates DCK in vitro by phosphorylation. TOP2A phosphorylation favors DNA cleavable complex formation. May regulate the formation of the mitotic spindle apparatus in extravillous trophoblast. Modulates connexin-43/GJA1 gap junction assembly by phosphorylation. Probably involved in lymphocyte physiology. Regulates fast synaptic transmission mediated by glutamate. This chain is Casein kinase I isoform delta (CSNK1D), found in Bos taurus (Bovine).